A 263-amino-acid chain; its full sequence is Type III pantothenate kinase (263 aa).

6–13 (DVGNTRIK) is an ATP binding site. Substrate is bound by residues Tyr92 and 99 to 102 (GTDR). The Proton acceptor role is filled by Asp101. Thr124 is an ATP binding site. Thr174 is a binding site for substrate.

It belongs to the type III pantothenate kinase family. As to quaternary structure, homodimer. NH4(+) is required as a cofactor. Requires K(+) as cofactor.

The protein localises to the cytoplasm. The enzyme catalyses (R)-pantothenate + ATP = (R)-4'-phosphopantothenate + ADP + H(+). It functions in the pathway cofactor biosynthesis; coenzyme A biosynthesis; CoA from (R)-pantothenate: step 1/5. Functionally, catalyzes the phosphorylation of pantothenate (Pan), the first step in CoA biosynthesis. In Azoarcus sp. (strain BH72), this protein is Type III pantothenate kinase.